The primary structure comprises 141 residues: Hemoglobin subunit alpha-D (141 aa).

Residues 1–141 (MLTADDKKIL…VAAVLAEKYR (141 aa)) form the Globin domain. Heme b contacts are provided by H58 and H87.

This sequence belongs to the globin family. As to quaternary structure, heterotetramer of two alpha-D chains and two beta chains. As to expression, red blood cells.

Involved in oxygen transport from the lung to the various peripheral tissues. The polypeptide is Hemoglobin subunit alpha-D (HBAD) (Branta canadensis (Canada goose)).